A 543-amino-acid chain; its full sequence is Chaperonin GroEL (543 aa).

ATP is bound by residues 29-32 (TLGP), 86-90 (DGTTT), Gly413, 477-479 (DAL), and Asp493. The disordered stretch occupies residues 524–543 (EKDKPEMPGGAPGMGMGGMY). Over residues 533 to 543 (GAPGMGMGGMY) the composition is skewed to gly residues.

Belongs to the chaperonin (HSP60) family. As to quaternary structure, forms a cylinder of 14 subunits composed of two heptameric rings stacked back-to-back. Interacts with the co-chaperonin GroES.

It localises to the cytoplasm. It carries out the reaction ATP + H2O + a folded polypeptide = ADP + phosphate + an unfolded polypeptide.. Functionally, together with its co-chaperonin GroES, plays an essential role in assisting protein folding. The GroEL-GroES system forms a nano-cage that allows encapsulation of the non-native substrate proteins and provides a physical environment optimized to promote and accelerate protein folding. The chain is Chaperonin GroEL from Clostridium acetobutylicum (strain ATCC 824 / DSM 792 / JCM 1419 / IAM 19013 / LMG 5710 / NBRC 13948 / NRRL B-527 / VKM B-1787 / 2291 / W).